The chain runs to 22 residues: Plasticin-TR (22 aa).

The protein belongs to the frog skin active peptide (FSAP) family. Plasticin subfamily. In terms of assembly, exhibits a propensity to self-association and forms helical oligomers in membrane-mimetic environments. As to expression, expressed by the skin glands.

It localises to the secreted. The protein resides in the target cell membrane. Has no antimicrobial activity against Gram-negative bacterium E.coli ATCC 25922, Gram-positive bacterium S.epidermidis ATCC 12228 and against fungus C.albicans ATCC 24433 at concentrations up to 100 uM. Has an anti-inflammatory effect, since it inhibits the production of the pro-inflammatory cytokines TNF-alpha and IL-1 beta. Has high activity of stimulation of insulin release, which may protect the species from being eaten by predators by causing fatal hypoglycemia. Is not cytotoxic to cancer line cells. Does not show hemolysis on mouse erythrocytes. Adopts a mixture of alpha-helical and beta-sheet structures. This chain is Plasticin-TR, found in Phyllomedusa trinitatis (Trinidad leaf frog).